A 148-amino-acid polypeptide reads, in one-letter code: Snaclec alboaggregin-D subunit beta (148 aa).

The signal sequence occupies residues 1–23 (MGRFISVSFGLLVVFLSLSGAGA). Cys-27 and Cys-38 are oxidised to a cystine. In terms of domain architecture, C-type lectin spans 34–145 (YDLYCYKVFK…CNSTYSFVCK (112 aa)). Residue Asn-47 is glycosylated (N-linked (GlcNAc...) asparagine). 2 disulfide bridges follow: Cys-55–Cys-144 and Cys-121–Cys-136. N-linked (GlcNAc...) asparagine glycosylation occurs at Asn-137.

As to quaternary structure, tetramer of heterodimers of alpha and beta subunits (alphabeta)(4); disulfide-linked. Expressed by the venom gland.

Its subcellular location is the secreted. Snaclec that induces human platelet aggregation in the absence of any cofactor with the EC(50) of 0.25 nM and causes tyrosine phosphorylation in human platelets. Antibodies against either platelet GPIbalpha (GP1BA) or GPVI (GP6) inhibit alboaggregin D-induced platelet aggregation. Only the combination of these two antibodies completely inhibit aggregation, suggesting that it acts through both GPIbalpha (GP1BA) and GPVI (GP6). In Trimeresurus albolabris (White-lipped pit viper), this protein is Snaclec alboaggregin-D subunit beta.